The following is a 434-amino-acid chain: GTPase Obg (434 aa).

The Obg domain maps to 4 to 162 (ADFIDRIVIY…RKLVLELKLL (159 aa)). In terms of domain architecture, OBG-type G spans 163–333 (ADVGLVGYPN…IVYKLAEIVK (171 aa)). GTP-binding positions include 169 to 176 (GYPNVGKS), 194 to 198 (FTTTI), 215 to 218 (DIPG), 285 to 288 (NKID), and 314 to 316 (SII). 2 residues coordinate Mg(2+): Ser176 and Thr196. Positions 355-434 (LWKELPERFN…VAQRAFEYKE (80 aa)) constitute an OCT domain.

The protein belongs to the TRAFAC class OBG-HflX-like GTPase superfamily. OBG GTPase family. In terms of assembly, monomer. Requires Mg(2+) as cofactor.

It is found in the cytoplasm. An essential GTPase which binds GTP, GDP and possibly (p)ppGpp with moderate affinity, with high nucleotide exchange rates and a fairly low GTP hydrolysis rate. Plays a role in control of the cell cycle, stress response, ribosome biogenesis and in those bacteria that undergo differentiation, in morphogenesis control. The sequence is that of GTPase Obg from Thermosipho africanus (strain TCF52B).